A 148-amino-acid polypeptide reads, in one-letter code: RxLR effector protein SFI7 (148 aa).

The N-terminal stretch at 1-22 (MRAYFVLLVAATAILTYGGATA) is a signal peptide. An N-linked (GlcNAc...) asparagine glycan is attached at N32. Residues 44 to 58 (RSLRVAPSGGNGEER) carry the RxLR-dEER motif.

Belongs to the RxLR effector family.

The protein localises to the secreted. The protein resides in the host cytoplasm. It is found in the host cell membrane. Functionally, effector that suppresses flg22-induced post-translational MAP kinase activation in tomato but not in Arabidopsis. The perception of highly conserved pathogen- or microbe-associated molecular patterns (PAMPs/MAMPs), such as flg22, triggers converging signaling pathways recruiting MAP kinase cascades and inducing transcriptional re-programming, yielding a generic antimicrobial response. Also partially attenuates INF1-triggered cell death. The polypeptide is RxLR effector protein SFI7 (Phytophthora infestans (strain T30-4) (Potato late blight agent)).